The sequence spans 392 residues: Caveolae-associated protein 1 (392 aa).

M1 carries the post-translational modification N-acetylmethionine. Basic and acidic residues predominate over residues 1–10 (MEDVTLHIVE). The disordered stretch occupies residues 1–45 (MEDVTLHIVERPYSGFPDASSEGPEPTQGEARATEEPSGTGSDEL). Residues 1–100 (MEDVTLHIVE…IQGELSKLGK (100 aa)) are required for homotrimerization and for interaction with CAVIN2 and CAVIN3. A phosphoserine mark is found at S21 and S38. Position 40 is a phosphothreonine (T40). A phosphoserine mark is found at S42 and S48. The nuclear export signal stretch occupies residues 54 to 64 (VLVLSLLDKII). The segment at 55–77 (LVLSLLDKIIGAVDQIQLTQAQL) is leucine-zipper 1. K118 is covalently cross-linked (Glycyl lysine isopeptide (Lys-Gly) (interchain with G-Cter in SUMO2)). S120 is modified (phosphoserine). K124 participates in a covalent cross-link: Glycyl lysine isopeptide (Lys-Gly) (interchain with G-Cter in SUMO2). The nuclear localization signal stretch occupies residues 138 to 154 (KKLEVNEAELLRRRNFK). The residue at position 158 (Y158) is a Phosphotyrosine. A Glycyl lysine isopeptide (Lys-Gly) (interchain with G-Cter in SUMO1); alternate cross-link involves residue K163. A Glycyl lysine isopeptide (Lys-Gly) (interchain with G-Cter in SUMO2); alternate cross-link involves residue K163. Residue K167 forms a Glycyl lysine isopeptide (Lys-Gly) (interchain with G-Cter in SUMO2) linkage. The leucine-zipper 2 stretch occupies residues 168-188 (LSVSKSLKESEALPEKEGDEL). Phosphoserine occurs at positions 169 and 171. K172 participates in a covalent cross-link: Glycyl lysine isopeptide (Lys-Gly) (interchain with G-Cter in SUMO2). Phosphoserine is present on residues S173 and S177. A compositionally biased stretch (basic and acidic residues) spans 173-183 (SLKESEALPEK). A disordered region spans residues 173–197 (SLKESEALPEKEGDELGEGERPEDD). Residues 184–197 (EGDELGEGERPEDD) are compositionally biased toward acidic residues. At T198 the chain carries Phosphothreonine. A coiled-coil region spans residues 201–284 (IELSSDEAVE…RMNKLGTRLV (84 aa)). A phosphoserine mark is found at S204 and S205. The tract at residues 235 to 251 (KKAFSKEKMEKTKVRTR) is nuclear localization signal. The segment at 259 to 299 (LKTKENLEKTRHTLEKRMNKLGTRLVPVERREKLKTSRDKL) is leucine-zipper 3. S302 bears the Phosphoserine mark. T304 is subject to Phosphothreonine. Residue Y310 is modified to Phosphotyrosine. A Glycyl lysine isopeptide (Lys-Gly) (interchain with G-Cter in SUMO2) cross-link involves residue K328. A disordered region spans residues 347 to 367 (GPEDDEVGAERGEATDLLRGS). Phosphoserine is present on residues S367, S368, S381, S389, and S391.

It belongs to the CAVIN family. In terms of assembly, component of the CAVIN complex composed of CAVIN1, CAVIN2, CAVIN3 and CAVIN4. Homotrimer. Interacts with LIPE in the adipocyte cytoplasm. Interacts with RNA polymerase I subunit POLR1A/RPA1. Interacts with TTF1. Binds the 3' end of pre-rRNA. Interacts with transcription factor ZNF148. Interacts with CAV1, CAVIN2 and CAVIN3. Interacts with CAVIN4. Phosphorylated. Present in active and inactive forms. Changes in phosphorylation pattern may alter activity. Phosphorylation at Tyr-158 is essential for its function in the regulation of the ribosomal transcriptional activity. In terms of processing, monoubiquitinated. Expressed in the heart, stomach, adipose tissue and lung (at protein level). Expressed in testis, kidney, muscle, liver, spleen and brain.

It localises to the membrane. It is found in the caveola. The protein localises to the cell membrane. The protein resides in the microsome. Its subcellular location is the endoplasmic reticulum. It localises to the cytoplasm. It is found in the cytosol. The protein localises to the mitochondrion. The protein resides in the nucleus. Its function is as follows. Plays an important role in caveolae formation and organization. Essential for the formation of caveolae in all tissues. Core component of the CAVIN complex which is essential for recruitment of the complex to the caveolae in presence of calveolin-1 (CAV1). Essential for normal oligomerization of CAV1. Promotes ribosomal transcriptional activity in response to metabolic challenges in the adipocytes and plays an important role in the formation of the ribosomal transcriptional loop. Dissociates transcription complexes paused by DNA-bound TTF1, thereby releasing both RNA polymerase I and pre-RNA from the template. The caveolae biogenesis pathway is required for the secretion of proteins such as GASK1A. This Mus musculus (Mouse) protein is Caveolae-associated protein 1 (Cavin1).